We begin with the raw amino-acid sequence, 119 residues long: UPF0212 protein Mlab_0931 (119 aa).

It belongs to the UPF0212 family.

In Methanocorpusculum labreanum (strain ATCC 43576 / DSM 4855 / Z), this protein is UPF0212 protein Mlab_0931.